We begin with the raw amino-acid sequence, 315 residues long: Aspartate carbamoyltransferase catalytic subunit (315 aa).

Positions 64 and 65 each coordinate carbamoyl phosphate. Lys92 provides a ligand contact to L-aspartate. Carbamoyl phosphate-binding residues include Arg114, His142, and Gln145. Positions 175 and 229 each coordinate L-aspartate. Carbamoyl phosphate-binding residues include Gly270 and Pro271.

The protein belongs to the aspartate/ornithine carbamoyltransferase superfamily. ATCase family. As to quaternary structure, heterododecamer (2C3:3R2) of six catalytic PyrB chains organized as two trimers (C3), and six regulatory PyrI chains organized as three dimers (R2).

The enzyme catalyses carbamoyl phosphate + L-aspartate = N-carbamoyl-L-aspartate + phosphate + H(+). It participates in pyrimidine metabolism; UMP biosynthesis via de novo pathway; (S)-dihydroorotate from bicarbonate: step 2/3. Catalyzes the condensation of carbamoyl phosphate and aspartate to form carbamoyl aspartate and inorganic phosphate, the committed step in the de novo pyrimidine nucleotide biosynthesis pathway. The chain is Aspartate carbamoyltransferase catalytic subunit from Methylorubrum extorquens (strain CM4 / NCIMB 13688) (Methylobacterium extorquens).